Reading from the N-terminus, the 125-residue chain is Basic leucine zipper transcriptional factor ATF-like (125 aa).

The segment covering Met1–Arg14 has biased composition (low complexity). Residues Met1 to Ser58 are disordered. Residues Asp26–His89 enclose the bZIP domain. The segment at Arg28–Lys50 is basic motif. Ser43 carries the phosphoserine modification. Thr48 bears the Phosphothreonine mark. The segment at Leu54–Leu75 is leucine-zipper.

Belongs to the bZIP family. Heterodimer; mainly heterodimerizes with JUNB. The BATF-JUNB heterodimer interacts with IRF4 and IRF8. Interacts (via bZIP domain) with IRF4 and IRF8; the interaction is direct. Also forms heterodimers with JUN and JUND. Also interacts with IFI35. Post-translationally, phosphorylated on serine and threonine residues and at least one tyrosine residue. Phosphorylation at Ser-43 inhibit DNA binding activity and transforms it as a negative regulator of AP-1 mediated transcription. In terms of processing, phosphorylated. In terms of tissue distribution, expressed at highest levels in lung, and at lower levels in placenta, liver, kidney, spleen, and peripheral blood. Detected in SW480 colorectal cancer cell line and several hematopoietic tumor cell lines, including Raji Burkitt's lymphoma. Strongly expressed in mature B- and T-lymphocytes. Also expressed in moderate levels in lymph node and appendix and at low levels in thymus and bone marrow.

The protein resides in the nucleus. The protein localises to the cytoplasm. AP-1 family transcription factor that controls the differentiation of lineage-specific cells in the immune system: specifically mediates the differentiation of T-helper 17 cells (Th17), follicular T-helper cells (TfH), CD8(+) dendritic cells and class-switch recombination (CSR) in B-cells. Acts via the formation of a heterodimer with JUNB that recognizes and binds DNA sequence 5'-TGA[CG]TCA-3'. The BATF-JUNB heterodimer also forms a complex with IRF4 (or IRF8) in immune cells, leading to recognition of AICE sequence (5'-TGAnTCA/GAAA-3'), an immune-specific regulatory element, followed by cooperative binding of BATF and IRF4 (or IRF8) and activation of genes. Controls differentiation of T-helper cells producing interleukin-17 (Th17 cells) by binding to Th17-associated gene promoters: regulates expression of the transcription factor RORC itself and RORC target genes such as IL17 (IL17A or IL17B). Also involved in differentiation of follicular T-helper cells (TfH) by directing expression of BCL6 and MAF. In B-cells, involved in class-switch recombination (CSR) by controlling the expression of both AICDA and of germline transcripts of the intervening heavy-chain region and constant heavy-chain region (I(H)-C(H)). Following infection, can participate in CD8(+) dendritic cell differentiation via interaction with IRF4 and IRF8 to mediate cooperative gene activation. Regulates effector CD8(+) T-cell differentiation by regulating expression of SIRT1. Following DNA damage, part of a differentiation checkpoint that limits self-renewal of hematopoietic stem cells (HSCs): up-regulated by STAT3, leading to differentiation of HSCs, thereby restricting self-renewal of HSCs. This is Basic leucine zipper transcriptional factor ATF-like (BATF) from Homo sapiens (Human).